The primary structure comprises 102 residues: Large ribosomal subunit protein bL21 (102 aa).

This sequence belongs to the bacterial ribosomal protein bL21 family. In terms of assembly, part of the 50S ribosomal subunit. Contacts protein L20.

In terms of biological role, this protein binds to 23S rRNA in the presence of protein L20. This is Large ribosomal subunit protein bL21 from Staphylococcus aureus.